A 293-amino-acid polypeptide reads, in one-letter code: Non-homologous end joining protein Ku (293 aa).

The Ku domain occupies 10–195 (ISFGLVHIPV…KLDKRELEMA (186 aa)). Residues 216–229 (SDKIMKLVEEKAAK) are required for dimerization. A disordered region spans residues 260–293 (RSRAGGGKDKGSEKAGADAKGRAKSGASRSRRKA). The span at 265–280 (GGKDKGSEKAGADAKG) shows a compositional bias: basic and acidic residues.

It belongs to the prokaryotic Ku family. As to quaternary structure, homodimer, may form higher-order multimers on DNA. Non-dimerized protein does not stimulate LigD ligase activity. Probably interacts with LigD.

Functionally, with LigD forms a non-homologous end joining (NHEJ) DNA repair enzyme, which repairs dsDNA breaks with reduced fidelity. Stimulates rNTP addition to DSB and end joining (ligation) of linear DNA by LigD, on 3'-overhangs and probably also 5'-overhangs and blunt dsDNA breaks. Binds both ends of linear dsDNA protecting it from exonuclease activity. The polypeptide is Non-homologous end joining protein Ku (Pseudomonas aeruginosa (strain ATCC 15692 / DSM 22644 / CIP 104116 / JCM 14847 / LMG 12228 / 1C / PRS 101 / PAO1)).